The primary structure comprises 155 residues: Endoribonuclease YbeY (155 aa).

3 residues coordinate Zn(2+): His-114, His-118, and His-124.

This sequence belongs to the endoribonuclease YbeY family. It depends on Zn(2+) as a cofactor.

The protein localises to the cytoplasm. Functionally, single strand-specific metallo-endoribonuclease involved in late-stage 70S ribosome quality control and in maturation of the 3' terminus of the 16S rRNA. The sequence is that of Endoribonuclease YbeY from Shigella flexneri serotype 5b (strain 8401).